We begin with the raw amino-acid sequence, 372 residues long: Glutamate 5-kinase (372 aa).

Lysine 14 contributes to the ATP binding site. 3 residues coordinate substrate: serine 54, aspartate 141, and asparagine 153. An ATP-binding site is contributed by 173–174; it reads TD. Residues 280–358 form the PUA domain; the sequence is RGTLVLDDGA…EAIVRELGYM (79 aa).

This sequence belongs to the glutamate 5-kinase family.

It is found in the cytoplasm. It catalyses the reaction L-glutamate + ATP = L-glutamyl 5-phosphate + ADP. Its pathway is amino-acid biosynthesis; L-proline biosynthesis; L-glutamate 5-semialdehyde from L-glutamate: step 1/2. In terms of biological role, catalyzes the transfer of a phosphate group to glutamate to form L-glutamate 5-phosphate. This chain is Glutamate 5-kinase, found in Pseudomonas syringae pv. tomato (strain ATCC BAA-871 / DC3000).